The following is a 329-amino-acid chain: Cytosolic arginine sensor for mTORC1 subunit 2 (329 aa).

ACT domains follow at residues 72–140 (ADAT…HTLS) and 262–322 (ELWK…HALK).

Belongs to the GATS family. As to quaternary structure, forms homodimers and heterodimers with CASTOR1. Interacts with the GATOR2 complex which is composed of MIOS, SEC13, SEH1L, WDR24 and WDR59; the interaction is not regulated by arginine.

The protein resides in the cytoplasm. The protein localises to the cytosol. Functionally, functions as a negative regulator of the TORC1 signaling pathway through the GATOR complex. As part of homodimers or heterodimers with CASTOR1, directly binds and inhibits the GATOR subcomplex GATOR2 and thereby mTORC1. Does not directly bind arginine, but binding of arginine to CASTOR1 disrupts the interaction of CASTOR2-containing heterodimers with GATOR2 which can in turn activate mTORC1 and the TORC1 signaling pathway. This is Cytosolic arginine sensor for mTORC1 subunit 2 from Mus musculus (Mouse).